A 400-amino-acid chain; its full sequence is Argininosuccinate synthase (400 aa).

ATP is bound at residue 8–16 (AYSGGLDTS). L-citrulline-binding residues include tyrosine 86 and serine 91. Glycine 116 lines the ATP pocket. L-aspartate-binding residues include threonine 118, asparagine 122, and aspartate 123. An L-citrulline-binding site is contributed by asparagine 122. Residues arginine 126, serine 175, serine 184, glutamate 260, and tyrosine 272 each coordinate L-citrulline.

Belongs to the argininosuccinate synthase family. Type 1 subfamily. Homotetramer.

The protein localises to the cytoplasm. It carries out the reaction L-citrulline + L-aspartate + ATP = 2-(N(omega)-L-arginino)succinate + AMP + diphosphate + H(+). It participates in amino-acid biosynthesis; L-arginine biosynthesis; L-arginine from L-ornithine and carbamoyl phosphate: step 2/3. The sequence is that of Argininosuccinate synthase from Clostridium acetobutylicum (strain ATCC 824 / DSM 792 / JCM 1419 / IAM 19013 / LMG 5710 / NBRC 13948 / NRRL B-527 / VKM B-1787 / 2291 / W).